The primary structure comprises 468 residues: Protein translocase subunit SecY (468 aa).

The Cytoplasmic portion of the chain corresponds to 1 to 20 (MGARDVIYAMEKWFPEVERP). A helical membrane pass occupies residues 21-47 (KKHVPLKEKFVWTGLALVLYYVLAEIP). The Extracellular segment spans residues 48 to 58 (VYGIPKKIQDY). An intramembrane region (helical) is located at residues 59–66 (FQFLRVVL). The chain crosses the membrane as a discontinuously helical span at residues 59-87 (FQFLRVVLAGRNGSILTLGIGPIVTAGII). The stretch at 67-78 (AGRNGSILTLGI) is an intramembrane region. An intramembrane region (helical) is located at residues 79-87 (GPIVTAGII). The Cytoplasmic segment spans residues 88–108 (LQLLVGSELIRLDLANPEDRR). A helical transmembrane segment spans residues 109–133 (FYQALQRVFSVFMCFFEAAIWVLGG). Residues 134–144 (AFGRVGVDVTY) are Extracellular-facing. Residues 145 to 169 (TIATLMIIQLALGGIILIVLDELVS) traverse the membrane as a helical segment. The Cytoplasmic segment spans residues 170-175 (KWGIGS). Residues 176 to 194 (GISLFIAAGVSQRILTRSL) form a helical membrane-spanning segment. The Extracellular portion of the chain corresponds to 195-239 (NPLTDPNIIDPLTGKPAIVGAIPYFIQHILDGDLKGALYRGGSAP). Residues 240–261 (DMIAVTATIIVFLVVVYFESMR) traverse the membrane as a helical segment. Over 262 to 285 (VEIPLGYRGVTIRGRYPIKFLYVS) the chain is Cytoplasmic. A helical membrane pass occupies residues 286–307 (NIPIILTFALYANIQLWARVLD). At 308-346 (RFGHPWLGRFDPVTGNPIGGFVLYVIPPRNIFTVIDNPV) the chain is on the extracellular side. The chain crosses the membrane as a helical span at residues 347 to 366 (RAIIYLILTIIFSLLFGFLW). The Cytoplasmic segment spans residues 367–409 (VELTGLDARTIARQLQRAGLQIPGFRRDPRTLERVLQKYIPYV). The helical transmembrane segment at 410–428 (TFWGSLTVALISVLADFLG) threads the bilayer. The Extracellular portion of the chain corresponds to 429–431 (ALG). A helical transmembrane segment spans residues 432 to 446 (TGTGILLTVGILYRF). Over 447-468 (YEEIAREQITEMFPALRRLFKG) the chain is Cytoplasmic.

It belongs to the SecY/SEC61-alpha family. Component of the Sec protein translocase complex. Heterotrimer consisting of alpha (SecY), beta (SecG) and gamma (SecE) subunits. The heterotrimers can form oligomers, although 1 heterotrimer is thought to be able to translocate proteins. Interacts with the ribosome. May interact with SecDF, and other proteins may be involved.

The protein localises to the cell membrane. Its function is as follows. The central subunit of the protein translocation channel SecYEG. Consists of two halves formed by TMs 1-5 and 6-10. These two domains form a lateral gate at the front which open onto the bilayer between TMs 2 and 7, and are clamped together by SecE at the back. The channel is closed by both a pore ring composed of hydrophobic SecY resides and a short helix (helix 2A) on the extracellular side of the membrane which forms a plug. The plug probably moves laterally to allow the channel to open. The ring and the pore may move independently. In Pyrococcus horikoshii (strain ATCC 700860 / DSM 12428 / JCM 9974 / NBRC 100139 / OT-3), this protein is Protein translocase subunit SecY.